The primary structure comprises 372 residues: MLLNVTSSQYISTPQSRSLSEIDTSETASLSSATDHIFALSTEVVSSITTNLIEGLESSIQVPISTAYGTTSFRNNTSSPQYLVSNCTSSVQSNITIDRGLLSTLKTFTTSQVPTIEPSTTKLTTPLSTTFTSTSTSEIYSVFTSENSVYIIYDQEYKFTERSTTFNTHFPQTTVLQESNPPLTFTIPSNTITGDAKLYQYLSGALNTQDTSDANNRRTGVIVGSTVGVVIGVVIVIFIGFIIIRNRRNVKNHSKKGFSHDIGKRVSCDEVTETEAPSNPFLNVLNYKVTTNGEGKRDSFENGRDLHRASSSDGIYIAHPYYGMADHESGRFSYVSSYNESAESSIEETSSSASTITRPNIQQTNSFLREII.

The chain crosses the membrane as a helical span at residues 224–244; that stretch reads GSTVGVVIGVVIVIFIGFIII. The residue at position 329 (S329) is a Phosphoserine.

The protein localises to the vacuole membrane. This is an uncharacterized protein from Saccharomyces cerevisiae (strain ATCC 204508 / S288c) (Baker's yeast).